A 217-amino-acid polypeptide reads, in one-letter code: Ras-related protein Rab-19 (217 aa).

Ser26, Val28, Gly29, Lys30, Thr31, Cys32, Tyr42, Glu44, and Thr49 together coordinate GTP. Position 31 (Thr31) interacts with Mg(2+). Residues 39 to 54 (SGVYMEAQQNTIGVDF) carry the Switch 1 motif. Residues Thr49 and Asp72 each contribute to the Mg(2+) site. A Switch 2 motif is present at residues 74–89 (AGQERFRTITQSYYRS). Residues Gly75, Asn130, Lys131, Asp133, Ser161, Ala162, and Lys163 each contribute to the GTP site. S-geranylgeranyl cysteine attachment occurs at residues Cys215 and Cys217. At Cys217 the chain carries Cysteine methyl ester.

The protein belongs to the small GTPase superfamily. Rab family. Mg(2+) serves as cofactor.

It localises to the cell membrane. The enzyme catalyses GTP + H2O = GDP + phosphate + H(+). Regulated by guanine nucleotide exchange factors (GEFs) which promote the exchange of bound GDP for free GTP. Regulated by GTPase activating proteins (GAPs) which increase the GTP hydrolysis activity. Inhibited by GDP dissociation inhibitors (GDIs). Functionally, the small GTPases Rab are key regulators of intracellular membrane trafficking, from the formation of transport vesicles to their fusion with membranes. Rabs cycle between an inactive GDP-bound form and an active GTP-bound form that is able to recruit to membranes different set of downstream effectors directly responsible for vesicle formation, movement, tethering and fusion. In Bos taurus (Bovine), this protein is Ras-related protein Rab-19 (RAB19).